The primary structure comprises 293 residues: Elongation factor Ts (293 aa).

An involved in Mg(2+) ion dislocation from EF-Tu region spans residues 80 to 83; the sequence is TDFV.

The protein belongs to the EF-Ts family.

It is found in the cytoplasm. Associates with the EF-Tu.GDP complex and induces the exchange of GDP to GTP. It remains bound to the aminoacyl-tRNA.EF-Tu.GTP complex up to the GTP hydrolysis stage on the ribosome. The chain is Elongation factor Ts from Burkholderia pseudomallei (strain 1106a).